Consider the following 171-residue polypeptide: O-acetyl-ADP-ribose deacetylase 1 (171 aa).

Positions 1-171 (MKKITVIQGD…NYDLYLKLLN (171 aa)) constitute a Macro domain. Substrate-binding positions include 10 to 11 (DI), Asn-24, 32 to 34 (GVD), and 121 to 125 (STGIY). Asp-34 (proton acceptor) is an active-site residue.

It belongs to the MacroD-type family. YmdB subfamily. In terms of assembly, homodimer. Interacts with RNase III.

The catalysed reaction is 3''-O-acetyl-ADP-D-ribose + H2O = ADP-D-ribose + acetate + H(+). It catalyses the reaction 2''-O-acetyl-ADP-D-ribose + H2O = ADP-D-ribose + acetate + H(+). Deacetylates O-acetyl-ADP ribose to yield ADP-ribose and free acetate. Down-regulates ribonuclease 3 (RNase III) activity. Acts by interacting directly with the region of the ribonuclease that is required for dimerization/activation. The sequence is that of O-acetyl-ADP-ribose deacetylase 1 from Pantoea vagans (strain C9-1) (Pantoea agglomerans (strain C9-1)).